The sequence spans 98 residues: Co-chaperonin GroES 1 (98 aa).

This sequence belongs to the GroES chaperonin family. In terms of assembly, heptamer of 7 subunits arranged in a ring. Interacts with the chaperonin GroEL.

The protein localises to the cytoplasm. Its function is as follows. Together with the chaperonin GroEL, plays an essential role in assisting protein folding. The GroEL-GroES system forms a nano-cage that allows encapsulation of the non-native substrate proteins and provides a physical environment optimized to promote and accelerate protein folding. GroES binds to the apical surface of the GroEL ring, thereby capping the opening of the GroEL channel. The chain is Co-chaperonin GroES 1 from Rhodopseudomonas palustris (strain ATCC BAA-98 / CGA009).